A 45-amino-acid polypeptide reads, in one-letter code: uncharacterized protein (45 aa).

This is an uncharacterized protein from Xylella fastidiosa (strain Temecula1 / ATCC 700964).